The sequence spans 361 residues: Phosphoribosylformylglycinamidine cyclo-ligase (361 aa).

The protein belongs to the AIR synthase family.

It localises to the cytoplasm. The catalysed reaction is 2-formamido-N(1)-(5-O-phospho-beta-D-ribosyl)acetamidine + ATP = 5-amino-1-(5-phospho-beta-D-ribosyl)imidazole + ADP + phosphate + H(+). It functions in the pathway purine metabolism; IMP biosynthesis via de novo pathway; 5-amino-1-(5-phospho-D-ribosyl)imidazole from N(2)-formyl-N(1)-(5-phospho-D-ribosyl)glycinamide: step 2/2. The chain is Phosphoribosylformylglycinamidine cyclo-ligase from Bartonella quintana (strain Toulouse) (Rochalimaea quintana).